We begin with the raw amino-acid sequence, 595 residues long: Aspartate--tRNA(Asp/Asn) ligase (595 aa).

Residue Glu174 participates in L-aspartate binding. The segment at 198–201 (QLFK) is aspartate. Residue Arg220 coordinates L-aspartate. ATP contacts are provided by residues 220–222 (RDE) and Gln229. His456 is a binding site for L-aspartate. ATP is bound at residue Glu486. Arg493 serves as a coordination point for L-aspartate. An ATP-binding site is contributed by 538–541 (GFDR).

This sequence belongs to the class-II aminoacyl-tRNA synthetase family. Type 1 subfamily. In terms of assembly, homodimer.

The protein resides in the cytoplasm. The enzyme catalyses tRNA(Asx) + L-aspartate + ATP = L-aspartyl-tRNA(Asx) + AMP + diphosphate. Aspartyl-tRNA synthetase with relaxed tRNA specificity since it is able to aspartylate not only its cognate tRNA(Asp) but also tRNA(Asn). Reaction proceeds in two steps: L-aspartate is first activated by ATP to form Asp-AMP and then transferred to the acceptor end of tRNA(Asp/Asn). In Gloeobacter violaceus (strain ATCC 29082 / PCC 7421), this protein is Aspartate--tRNA(Asp/Asn) ligase.